A 1803-amino-acid chain; its full sequence is 6-methylsalicylic acid synthase (1803 aa).

The segment at 1 to 40 (MEVHGDEVLSVDSGVSTPPSTGSGFRRPLETPGTEIGNLN) is disordered. Positions 13–24 (SGVSTPPSTGSG) are enriched in low complexity. A Ketosynthase family 3 (KS3) domain is found at 44-470 (QNEVAVVGMA…GTVSHAIIEE (427 aa)). Active-site for beta-ketoacyl synthase activity residues include cysteine 216, histidine 351, and histidine 391. Positions 581 to 894 (VWVFSGHGAQ…SIAQLHCRGA (314 aa)) constitute a Malonyl-CoA:ACP transacylase (MAT) domain. Serine 667 (for malonyltransferase activity) is an active-site residue. The N-terminal hotdog fold stretch occupies residues 940–1058 (HTLLGQRVPV…GQWEAGGSKN (119 aa)). Residues 940-1218 (HTLLGQRVPV…FSEIEGTPGS (279 aa)) form the PKS/mFAS DH domain. Catalysis depends on histidine 972, which acts as the Proton acceptor; for thioesterase activity. Residues 1073–1218 (ANNKLADNFS…FSEIEGTPGS (146 aa)) form a C-terminal hotdog fold region. Aspartate 1129 serves as the catalytic Proton donor; for thioesterase activity. A required for homotetramer formation region spans residues 1141-1262 (TSVGSTLFFD…KNVADLYCGS (122 aa)). In terms of domain architecture, Ketoreductase (KR) spans 1434–1628 (STYLITGGLG…AVAVQWTSWR (195 aa)). Residues 1701–1710 (ASSADAPSAA) show a composition bias toward low complexity. The tract at residues 1701-1721 (ASSADAPSAAPKETNEMPESI) is disordered. A Carrier domain is found at 1726-1801 (TWLDERIRDC…HLVGWFLEKM (76 aa)). At serine 1761 the chain carries O-(pantetheine 4'-phosphoryl)serine. Residues 1783 to 1803 (LTWSCPTVSHLVGWFLEKMGN) form a required for catalytic activity region.

In terms of assembly, homotetramer.

The catalysed reaction is 3 malonyl-CoA + acetyl-CoA + NADPH + 3 H(+) = 6-methylsalicylate + 3 CO2 + NADP(+) + 4 CoA + H2O. The protein operates within secondary metabolite biosynthesis. Functionally, 6-methylsalicylic acid synthase; part of the gene cluster that mediates the biosynthesis of terreic acid, a quinone epoxide inhibitor of Bruton's tyrosine kinase. The first step of the pathway is the synthesis of 6-methylsalicylic acid (6-MSA) by the 6-methylsalicylic acid synthase atX. In the biosynthesis of 6-MSA, atX utilizes one acetyl-CoA and three malonyl-CoAs as its substrates and catalyzes a series of programmed reactions including Claisen condensation, reduction, aldol cyclization, and the hydrolytic cleavage that yields 6-MSA. The 6-methylsalicylate 1-monooxygenase atA then catalyzes the decarboxylative hydroxylation of 6-MSA to 3-methylcatechol. The next step is the conversion of 3-methylcatechol to 3-methyl-1,2,4-benzenetriol by cytochrome P450 monooxygenase atE, which is enhanced by cytochrome P450 monooxygenase atG. Then, the epoxidase atD catalyzes the epoxidation and hydroxyl oxidation of 3-methyl-1,2,4-benzenetriol to terremutin. Lastly, GMC oxidoreductase atC oxidizes terremutin to terreic acid. This chain is 6-methylsalicylic acid synthase, found in Aspergillus terreus (strain NIH 2624 / FGSC A1156).